The sequence spans 885 residues: MMGISKRISSIKFALLSPDEIRKLSQVKVITADTYDDDGYPIEHGLMDLHMGVIEPGLRCATCGGKVDECPGHFGHIELAMPVVHVGFVKEIKMFLDATCRSCGRIKLTDDEIRTYLPEIQKMDFETGDPEDIEILTKKYVDLASQRMVCPHCGAQQSKIILDKPTTFREEGTNVKITPKEIRERLERIPDDDLIFFGFNPKTARPEWMVLTVLPVPPINVRPSITLETGERSEDDLTHKLVDIIRISQRLRESRDNGSPQLIIEDLWDLLQFHVTTYFDNQTPGIPPARHRSGRALKTLVQRLKGKEGRFRSNLSGKRVSFSSRTVISPEPYLSVNEVGVPERAARELTVPVIVNQFNIDEMRELIKRGRNPRDQFGRYVTGVNYVIRPDGRRIKITDQNAAENADRIDIGWTVERQLMEGDIVLFNRQPSLHRMSMMGHTVRILPGQTFRFNLAVCTPYNADFDGDEMNLHVIQKEEARAEARIIMKVQEQIMSPRFGGPIIGGIHDHVTALFLLTHNNPRYTHEEMVHIMAYLEPDLLPEARIENGEKYYYGRDIFSTILPKGLNVRFRSKLCSGSSERCEFEDDPSDTYVEIVDGKMIHGTIDEAAVSPFSGAIIDKIFRKFGSQEAARFIDRMTRLAVGFITYRGFSTGISDYDIPESAVARIEELVAQAEDRINKLIETFRRGELQPAPGRSVEDTLEMEILSEAGVVRDESGKIASSYLGLKVPSVIMARSGARATMLNISEVAGIVGQQSVRGGRLNRGYYNRTLPHFKRGDIGADARGFVRSSYMTGLSPTEYFFHSIGGREGLVDTAVRTSRSGYMQRRLINAFEDLKVDDSREVKDTVGSLIQIRYGEDGIDPTRSARGKAVDMNYILFDEERR.

Zn(2+) contacts are provided by C60, C63, C70, H73, C100, C103, C150, and C153. The Mg(2+) site is built by D464, D466, and D468.

It belongs to the RNA polymerase beta' chain family. In terms of assembly, part of the RNA polymerase complex. Mg(2+) is required as a cofactor. Requires Zn(2+) as cofactor.

The protein localises to the cytoplasm. The catalysed reaction is RNA(n) + a ribonucleoside 5'-triphosphate = RNA(n+1) + diphosphate. In terms of biological role, DNA-dependent RNA polymerase (RNAP) catalyzes the transcription of DNA into RNA using the four ribonucleoside triphosphates as substrates. Forms the clamp head domain. In Thermoplasma acidophilum (strain ATCC 25905 / DSM 1728 / JCM 9062 / NBRC 15155 / AMRC-C165), this protein is DNA-directed RNA polymerase subunit Rpo1N.